A 473-amino-acid chain; its full sequence is Lysophospholipid acyltransferase 5 (473 aa).

Transmembrane regions (helical) follow at residues 20 to 40 (LLISVLAGYPLAVVHRTFFYN), 43 to 63 (AQHQHLFFVIVGLSLWMFNCG), 66 to 86 (VIHPILSIFGAFFITNFMAGT), and 88 to 108 (ASIYAAHIVFLGHLLIGYWFH). Active-site residues include asparagine 315 and histidine 351. Helical transmembrane passes span 341-361 (VITLSYLAIWHGYHLGYFLLF), 396-416 (FIWIFGKLTISYSMGFAFLMF), and 431-451 (LYFIGFIIYFIVWPILHMVLL). Residues 470 to 473 (KKEL) carry the Di-lysine motif motif.

Belongs to the membrane-bound acyltransferase family.

It is found in the endoplasmic reticulum membrane. It catalyses the reaction a 1-acyl-sn-glycero-3-phosphocholine + an acyl-CoA = a 1,2-diacyl-sn-glycero-3-phosphocholine + CoA. The enzyme catalyses a 1-acyl-sn-glycero-3-phospho-L-serine + an acyl-CoA = a 1,2-diacyl-sn-glycero-3-phospho-L-serine + CoA. The catalysed reaction is a 1-acyl-sn-glycero-3-phosphoethanolamine + an acyl-CoA = a 1,2-diacyl-sn-glycero-3-phosphoethanolamine + CoA. It functions in the pathway lipid metabolism; phospholipid metabolism. Probable acyltransferase which may mediate the conversion of lysophosphatidylcholine (1-acyl-sn-glycero-3-phosphocholine or LPC) into phosphatidylcholine (1,2-diacyl-sn-glycero-3-phosphocholine or PC) (LPCAT activity). May also catalyze the conversion of lysophosphatidylethanolamine (1-acyl-2-hydroxy-sn-glycero-3-phosphoethanolamine or LPE) into phosphatidylethanolamine (1,2-diacyl-sn-glycero-3-phosphoethanolamine or PE) (LPEAT activity), as well as the conversion of lysophosphatidylserine (1-acyl-2-hydroxy-sn-glycero-3-phospho-L-serine or LPS) into phosphatidylserine (1,2-diacyl-sn-glycero-3-phospho-L-serine or PS) (LPSAT activity). Required for incorporation of arachidonic acid into PC, PE, and PS. The chain is Lysophospholipid acyltransferase 5 (mboa-6) from Caenorhabditis elegans.